Here is a 378-residue protein sequence, read N- to C-terminus: Chaperone protein DnaJ (378 aa).

Residues 6–70 form the J domain; that stretch reads DYYDVLGVSR…QKRQQYDQFG (65 aa). Residues 137–219 form a CR-type zinc finger; that stretch reads GKTSEISYSR…CHGKGVKTQK (83 aa). Residues Cys150, Cys153, Cys167, Cys170, Cys193, Cys196, Cys207, and Cys210 each contribute to the Zn(2+) site. CXXCXGXG motif repeat units lie at residues 150–157, 167–174, 193–200, and 207–214; these read CEVCKGSG, CDKCGGSG, CDKCTGSG, and CHNCHGKG.

Belongs to the DnaJ family. Homodimer. Requires Zn(2+) as cofactor.

It is found in the cytoplasm. In terms of biological role, participates actively in the response to hyperosmotic and heat shock by preventing the aggregation of stress-denatured proteins and by disaggregating proteins, also in an autonomous, DnaK-independent fashion. Unfolded proteins bind initially to DnaJ; upon interaction with the DnaJ-bound protein, DnaK hydrolyzes its bound ATP, resulting in the formation of a stable complex. GrpE releases ADP from DnaK; ATP binding to DnaK triggers the release of the substrate protein, thus completing the reaction cycle. Several rounds of ATP-dependent interactions between DnaJ, DnaK and GrpE are required for fully efficient folding. Also involved, together with DnaK and GrpE, in the DNA replication of plasmids through activation of initiation proteins. This Lactobacillus delbrueckii subsp. bulgaricus (strain ATCC 11842 / DSM 20081 / BCRC 10696 / JCM 1002 / NBRC 13953 / NCIMB 11778 / NCTC 12712 / WDCM 00102 / Lb 14) protein is Chaperone protein DnaJ.